Consider the following 319-residue polypeptide: Transcription initiation factor IIB 6 (319 aa).

Residues 1-16 (MTDARMRSREQERTDE) show a composition bias toward basic and acidic residues. The segment at 1 to 33 (MTDARMRSREQERTDETESESTDGCPECGGLVV) is disordered. A TFIIB-type zinc finger spans residues 21 to 51 (STDGCPECGGLVVNDEEHGESVCADCGLVVE). Residues Cys25, Cys28, Cys43, and Cys46 each coordinate Zn(2+). Over residues 59–74 (PEWRAFDSKEKDEKSR) the composition is skewed to basic and acidic residues. A disordered region spans residues 59–89 (PEWRAFDSKEKDEKSRVGAPTTNTMHDKGLS). 2 repeat units span residues 137 to 220 (GEID…VREL) and 231 to 312 (SYVP…ELLE).

It belongs to the TFIIB family.

Stabilizes TBP binding to an archaeal box-A promoter. Also responsible for recruiting RNA polymerase II to the pre-initiation complex (DNA-TBP-TFIIB). The sequence is that of Transcription initiation factor IIB 6 from Halobacterium salinarum (strain ATCC 700922 / JCM 11081 / NRC-1) (Halobacterium halobium).